A 131-amino-acid polypeptide reads, in one-letter code: Large-conductance mechanosensitive channel (131 aa).

3 helical membrane passes run 8-28, 30-50, and 67-87; these read FAMR…GAFG, IVSS…LGGV, and GMFI…FVFV.

This sequence belongs to the MscL family. In terms of assembly, homopentamer.

It localises to the cell membrane. Channel that opens in response to stretch forces in the membrane lipid bilayer. May participate in the regulation of osmotic pressure changes within the cell. The chain is Large-conductance mechanosensitive channel from Geobacillus sp. (strain WCH70).